Consider the following 279-residue polypeptide: MSSSSGSAVNIAIVTLFPEMFAAITESGISRRAVEQGLVKLSFFNPRTYTTDKHQTVDDRPYGGGPGMVMRVEPLAKALLAAKQWHSEQRAEQALPNTAKETVIYMSPQGAQLNNQAVDTMAASGDFTIIAGRYEGVDQRFIDAFVDQEWSIGDYVLSGGELPAMVLIDALIRKLPGALGDAQSAEQDSFENGLLDCPHYTRPEELADAWQTSVDDRRVPAVLLSGDHKKIELWRLKQSLGRTWERRPDLLNKLDLDQSQRNLLTEYQQQKLSCSSSDD.

S-adenosyl-L-methionine contacts are provided by residues glycine 132 and 152–157 (IGDYVL).

The protein belongs to the RNA methyltransferase TrmD family. Homodimer.

It localises to the cytoplasm. The catalysed reaction is guanosine(37) in tRNA + S-adenosyl-L-methionine = N(1)-methylguanosine(37) in tRNA + S-adenosyl-L-homocysteine + H(+). Functionally, specifically methylates guanosine-37 in various tRNAs. The protein is tRNA (guanine-N(1)-)-methyltransferase of Saccharophagus degradans (strain 2-40 / ATCC 43961 / DSM 17024).